The chain runs to 555 residues: Alpha-1,2-mannosyltransferase ALG9 (555 aa).

Residues 1–7 (MNCKAVT) lie on the Cytoplasmic side of the membrane. Residues 8–28 (ISLLLLLFLTRVYIQPTFSLI) form a helical membrane-spanning segment. Over 29–62 (SDCDETFNYWEPLNLLVRGFGKQTWEYSPEYSIR) the chain is Lumenal. The chain crosses the membrane as a helical span at residues 63–83 (SWAFLLPFYCILYPVNKFTDL). Residues 84-86 (ESH) lie on the Cytoplasmic side of the membrane. Residues 87–107 (WNFFITRACLGFFSFIMEFKL) form a helical membrane-spanning segment. At 108 to 113 (HREIAG) the chain is on the lumenal side. The helical transmembrane segment at 114–134 (SLALQIANIWIIFQLFNPGWF) threads the bilayer. Topologically, residues 135–176 (HASVELLPSAVAMLLYVGATRHSLRYLSTGSTSNFTKSLAYN) are cytoplasmic. Residues 177 to 197 (FLASILGWPFVLILSLPLCLH) traverse the membrane as a helical segment. Residues 198-213 (YLFNHRIISTIRTAFD) lie on the Lumenal side of the membrane. Residues 214–234 (CCLIFSLTAFAVIVTDSIFYG) form a helical membrane-spanning segment. At 235 to 268 (KLAPVSWNILFYNVINASEESGPNIFGVEPWYYY) the chain is on the cytoplasmic side. Residues 269–289 (PLNLLLNFPLPVLVLAILGIF) traverse the membrane as a helical segment. At 290 to 316 (HLRLWPLWASLFTWIAVFTQQPHKEER) the chain is on the lumenal side. A helical transmembrane segment spans residues 317–337 (FLYPIYGLITLSASIAFYKVL). At 338-349 (NLFNRKPILKKG) the chain is on the cytoplasmic side. A helical transmembrane segment spans residues 350 to 370 (IKLSVLLIVAGQAMSRIVALV). Topologically, residues 371 to 555 (NNYTAPIAVY…LFEKPTETTN (185 aa)) are lumenal.

It belongs to the glycosyltransferase 22 family.

Its subcellular location is the endoplasmic reticulum membrane. It catalyses the reaction an alpha-D-Man-(1-&gt;2)-alpha-D-Man-(1-&gt;2)-alpha-D-Man-(1-&gt;3)-[alpha-D-Man-(1-&gt;3)-alpha-D-Man-(1-&gt;6)]-beta-D-Man-(1-&gt;4)-beta-D-GlcNAc-(1-&gt;4)-alpha-D-GlcNAc-diphospho-di-trans,poly-cis-dolichol + a di-trans,poly-cis-dolichyl beta-D-mannosyl phosphate = an alpha-D-Man-(1-&gt;2)-alpha-D-Man-(1-&gt;2)-alpha-D-Man-(1-&gt;3)-[alpha-D-Man-(1-&gt;2)-alpha-D-Man-(1-&gt;3)-alpha-D-Man-(1-&gt;6)]-beta-D-Man-(1-&gt;4)-beta-D-GlcNAc-(1-&gt;4)-alpha-D-GlcNAc-diphospho-di-trans,poly-cis-dolichol + a di-trans,poly-cis-dolichyl phosphate + H(+). The catalysed reaction is an alpha-D-Man-(1-&gt;2)-alpha-D-Man-(1-&gt;2)-alpha-D-Man-(1-&gt;3)-[alpha-D-Man-(1-&gt;2)-alpha-D-Man-(1-&gt;3)-[alpha-D-Man-(1-&gt;6)]-alpha-D-Man-(1-&gt;6)]-beta-D-Man-(1-&gt;4)-beta-D-GlcNAc-(1-&gt;4)-alpha-D-GlcNAc-diphospho-di-trans,poly-cis-dolichol + a di-trans,poly-cis-dolichyl beta-D-mannosyl phosphate = an alpha-D-Man-(1-&gt;2)-alpha-D-Man-(1-&gt;2)-alpha-D-Man-(1-&gt;3)-[alpha-D-Man-(1-&gt;2)-alpha-D-Man-(1-&gt;3)-[alpha-D-Man-(1-&gt;2)-alpha-D-Man-(1-&gt;6)]-alpha-D-Man-(1-&gt;6)]-beta-D-Man-(1-&gt;4)-beta-D-GlcNAc-(1-&gt;4)-alpha-D-GlcNAc-diphospho-di-trans,poly-cis-dolichol + a di-trans,poly-cis-dolichyl phosphate + H(+). Its pathway is protein modification; protein glycosylation. Its function is as follows. Mannosyltransferase that operates in the biosynthetic pathway of dolichol-linked oligosaccharides, the glycan precursors employed in protein asparagine (N)-glycosylation. The assembly of dolichol-linked oligosaccharides begins on the cytosolic side of the endoplasmic reticulum membrane and finishes in its lumen. The sequential addition of sugars to dolichol pyrophosphate produces dolichol-linked oligosaccharides containing fourteen sugars, including two GlcNAcs, nine mannoses and three glucoses. Once assembled, the oligosaccharide is transferred from the lipid to nascent proteins by oligosaccharyltransferases. In the lumen of the endoplasmic reticulum, catalyzes the addition of the seventh and ninth alpha-1,2-linked mannose residues to Man(6)GlcNAc(2)-PP-dolichol and Man(8)GlcNAc(2)-PP-dolichol respectively. The protein is Alpha-1,2-mannosyltransferase ALG9 (ALG9) of Saccharomyces cerevisiae (strain ATCC 204508 / S288c) (Baker's yeast).